The following is a 99-amino-acid chain: Leydig cell tumor 10 kDa protein homolog (99 aa).

Positions 1–37 (MAQGQRKFQARKPAKSKTAATASEKNRGPRKGGRVIA) are disordered. Residues 28–37 (GPRKGGRVIA) show a composition bias toward basic residues.

The protein belongs to the UPF0390 family.

Functionally, may have a potential role in hypercalcemia of malignancy. The protein is Leydig cell tumor 10 kDa protein homolog of Pongo abelii (Sumatran orangutan).